The primary structure comprises 599 residues: uncharacterized protein (599 aa).

Polar residues predominate over residues 1–10; it reads MEQQSENVYF. The segment at 1–146 is disordered; the sequence is MEQQSENVYF…EPSFTLTELP (146 aa). Over residues 11 to 20 the composition is skewed to low complexity; sequence SGSESESLSD. A compositionally biased stretch (polar residues) spans 24–44; it reads RAQPQNQNSDNSRSASLTPPD. 2 stretches are compositionally biased toward acidic residues: residues 46-56 and 89-114; these read SDLEDYVDSDS and NGSDDDSEDEDESNDEQDLVESEEED. The segment covering 118 to 127 has biased composition (low complexity); the sequence is RSSSRSAMDI. Positions 128–138 are enriched in acidic residues; that stretch reads SSEEDSGDDEP.

Belongs to the IIV-6 229L family.

This is an uncharacterized protein from Aedes vexans (Inland floodwater mosquito).